Here is a 95-residue protein sequence, read N- to C-terminus: Acylphosphatase (95 aa).

An Acylphosphatase-like domain is found at 5 to 93 (RAHLYIKGKV…GEFQDFRILP (89 aa)). Active-site residues include R20 and N38.

It belongs to the acylphosphatase family.

It carries out the reaction an acyl phosphate + H2O = a carboxylate + phosphate + H(+). This Pyrobaculum islandicum (strain DSM 4184 / JCM 9189 / GEO3) protein is Acylphosphatase (acyP).